The sequence spans 69 residues: Cytochrome c oxidase subunit 8A, mitochondrial (69 aa).

Residues 1–25 constitute a mitochondrion transit peptide; it reads MSVLTSLLLRGLTGSARRLPVPRAK. At 26–36 the chain is on the mitochondrial matrix side; sequence VHSMPPEEELG. Residues 37 to 60 form a helical membrane-spanning segment; it reads IMEKAIGLTFCFVSLFLPAGWILS. The Mitochondrial intermembrane portion of the chain corresponds to 61–69; it reads HLEDYKRPE.

This sequence belongs to the cytochrome c oxidase VIII family. In terms of assembly, component of the cytochrome c oxidase (complex IV, CIV), a multisubunit enzyme composed of 14 subunits. The complex is composed of a catalytic core of 3 subunits MT-CO1, MT-CO2 and MT-CO3, encoded in the mitochondrial DNA, and 11 supernumerary subunits COX4I, COX5A, COX5B, COX6A, COX6B, COX6C, COX7A, COX7B, COX7C, COX8 and NDUFA4, which are encoded in the nuclear genome. The complex exists as a monomer or a dimer and forms supercomplexes (SCs) in the inner mitochondrial membrane with NADH-ubiquinone oxidoreductase (complex I, CI) and ubiquinol-cytochrome c oxidoreductase (cytochrome b-c1 complex, complex III, CIII), resulting in different assemblies (supercomplex SCI(1)III(2)IV(1) and megacomplex MCI(2)III(2)IV(2)). In response to mitochondrial stress, the precursor protein is ubiquitinated by the SIFI complex in the cytoplasm before mitochondrial import, leading to its degradation. Within the SIFI complex, UBR4 initiates ubiquitin chain that are further elongated or branched by KCMF1.

The protein localises to the mitochondrion inner membrane. Its pathway is energy metabolism; oxidative phosphorylation. Component of the cytochrome c oxidase, the last enzyme in the mitochondrial electron transport chain which drives oxidative phosphorylation. The respiratory chain contains 3 multisubunit complexes succinate dehydrogenase (complex II, CII), ubiquinol-cytochrome c oxidoreductase (cytochrome b-c1 complex, complex III, CIII) and cytochrome c oxidase (complex IV, CIV), that cooperate to transfer electrons derived from NADH and succinate to molecular oxygen, creating an electrochemical gradient over the inner membrane that drives transmembrane transport and the ATP synthase. Cytochrome c oxidase is the component of the respiratory chain that catalyzes the reduction of oxygen to water. Electrons originating from reduced cytochrome c in the intermembrane space (IMS) are transferred via the dinuclear copper A center (CU(A)) of subunit 2 and heme A of subunit 1 to the active site in subunit 1, a binuclear center (BNC) formed by heme A3 and copper B (CU(B)). The BNC reduces molecular oxygen to 2 water molecules using 4 electrons from cytochrome c in the IMS and 4 protons from the mitochondrial matrix. The sequence is that of Cytochrome c oxidase subunit 8A, mitochondrial (COX8A) from Macaca fascicularis (Crab-eating macaque).